The sequence spans 2485 residues: Probable polyketide synthase 10 (2485 aa).

Positions 8–447 (EDDIAIIGVG…GANCCIILSE (440 aa)) constitute a Ketosynthase family 3 (KS3) domain. Catalysis depends on for beta-ketoacyl synthase activity residues Cys-184, His-325, and His-363. The segment at 636-669 (GIEASFIVGHSLGEISAAHCSGMIDLETLCYIIY) is acyl/malonyl transferase. Ser-646 functions as the For acyl/malonyl transferase activity in the catalytic mechanism. An N-terminal hotdog fold region spans residues 930-1054 (PPITILGNES…GNFHISNNLF (125 aa)). The PKS/mFAS DH domain occupies 930–1220 (PPITILGNES…SKSLTPIQDP (291 aa)). His-964 acts as the Proton acceptor; for dehydratase activity in catalysis. The segment at 1071–1220 (NYSLIERDDL…SKSLTPIQDP (150 aa)) is C-terminal hotdog fold. The active-site Proton donor; for dehydratase activity is the Asp-1134. In terms of domain architecture, Carrier spans 2410–2485 (ESNKGIDGLL…NQLIKFLNKK (76 aa)). Residue Ser-2447 is modified to O-(pantetheine 4'-phosphoryl)serine.

The cofactor is pantetheine 4'-phosphate.

In terms of biological role, probable polyketide synthase. This chain is Probable polyketide synthase 10 (pks10), found in Dictyostelium discoideum (Social amoeba).